The sequence spans 180 residues: Uterocalin (180 aa).

A signal peptide spans 1 to 18 (MNLLLLAMGLILPRRPHA). A disulfide bridge links C82 with C175. N101 carries N-linked (GlcNAc...) asparagine glycosylation.

It belongs to the calycin superfamily. Lipocalin family. As to expression, expressed in glandular and lumenal epithelia of the endometrium. Is transferred to the embryonic capsule, the conceptus and the yolk sac.

The protein localises to the secreted. In terms of biological role, binds fatty acids and retinol. Is specialized for the preattachment embryo. May be important to maintain the pregnancy and may transport small hydrophobic ligands from mother to the developing embryo. The chain is Uterocalin from Equus caballus (Horse).